The chain runs to 369 residues: Superinfection exclusion protein (369 aa).

Residues Met-1–Thr-15 form the signal peptide.

Belongs to the serpin family. Orthopoxvirus OPG040 subfamily. In terms of assembly, interacts with A56 protein.

It localises to the virion membrane. Its subcellular location is the host cell membrane. Its function is as follows. Prevents cell to cell fusion via its interaction with A56 protein. The A56-K2 complex associates with components of the entry fusion complex (EFC) presumably to avoid superinfection and syncytium formation. The protein is Superinfection exclusion protein (OPG040) of Vaccinia virus (strain Copenhagen) (VACV).